Here is a 317-residue protein sequence, read N- to C-terminus: U5 small nuclear ribonucleoprotein TSSC4 (317 aa).

Residues 1 to 19 (MAETEAGLEVEEPTEDDTL) are compositionally biased toward acidic residues. Residues 1–78 (MAETEAGLEV…IPTTAVQPFH (78 aa)) form a disordered region. Residues 20–37 (PSDTVSLSDSDSDLSLPS) are compositionally biased toward low complexity. A phosphoserine mark is found at serine 57, serine 64, serine 83, and serine 92. The hom2; mediates interaction with the U5 snRNP complexes and required for spliceosomal tri-snRNP complex assembly stretch occupies residues 74-101 (VQPFHLRGMSSTFSQRSHSIFDCLESAA). A disordered region spans residues 123–151 (VAPPSQTPARSLSRVHGNTDPTRVHPVPD). An interaction with SNRNP200 region spans residues 146–300 (VHPVPDYVSH…SKKRSRDHFR (155 aa)). The interval 147–183 (HPVPDYVSHPERWTKYSLEDVSETSEQSNRDAALAFL) is hom3; mediates interaction with the U5 snRNP complexes. The hom4; necessary for interaction with the PRPF19 complex and required for spliceosomal tri-snRNP complex assembly stretch occupies residues 198-238 (FNQDPSSCGEGRVVFTKPVRGSEARAERKRVLKKGVVSGAG). N6-acetyllysine is present on lysine 214. Residues 247 to 317 (HLAGPEAEEW…GPGSERGPSV (71 aa)) are disordered.

This sequence belongs to the TSSC4 family. In terms of assembly, interacts in a RNA-independent manner with distinct U5 snRNP-containing complexes, the mono-U5 snRNP and the post-splicing U5 snRNP-PRPF19 complex. Interacts with SNRNP200; the interaction is direct, excludes recruitment of C9ORF78 and WBP4 to SNRNP200 and negatively regulates its RNA helicase activity. Interacts with PRPF8; the interaction is direct.

It is found in the nucleus. It localises to the cytoplasm. Functionally, protein associated with the U5 snRNP, during its maturation and its post-splicing recycling and which is required for spliceosomal tri-snRNP complex assembly in the nucleus. Has a molecular sequestering activity and transiently hinders SNRNP200 binding sites for constitutive splicing factors that intervene later during the assembly of the spliceosome and splicing. Together with its molecular sequestering activity, may also function as a molecular adapter and placeholder, coordinating the assembly of the U5 snRNP and its association with the U4/U6 di-snRNP. The protein is U5 small nuclear ribonucleoprotein TSSC4 of Rattus norvegicus (Rat).